The primary structure comprises 404 residues: L-cysteine:1D-myo-inositol 2-amino-2-deoxy-alpha-D-glucopyranoside ligase (404 aa).

Residue Cys47 participates in Zn(2+) binding. Residues 47–50 (CGIT), Thr62, and 85–87 (NIT) contribute to the L-cysteinyl-5'-AMP site. A 'HIGH' region motif is present at residues 49 to 59 (ITPYDSTHLGH). Residues 188-193 (ERGGDP) carry the 'ERGGDP' region motif. Residue Trp228 coordinates L-cysteinyl-5'-AMP. Cys232 is a Zn(2+) binding site. 250–252 (GSD) is an L-cysteinyl-5'-AMP binding site. Residue His257 coordinates Zn(2+). Ile284 is an L-cysteinyl-5'-AMP binding site. The short motif at 290–294 (KMSKS) is the 'KMSKS' region element.

This sequence belongs to the class-I aminoacyl-tRNA synthetase family. MshC subfamily. In terms of assembly, monomer. Zn(2+) is required as a cofactor.

The enzyme catalyses 1D-myo-inositol 2-amino-2-deoxy-alpha-D-glucopyranoside + L-cysteine + ATP = 1D-myo-inositol 2-(L-cysteinylamino)-2-deoxy-alpha-D-glucopyranoside + AMP + diphosphate + H(+). Its function is as follows. Catalyzes the ATP-dependent condensation of GlcN-Ins and L-cysteine to form L-Cys-GlcN-Ins. The chain is L-cysteine:1D-myo-inositol 2-amino-2-deoxy-alpha-D-glucopyranoside ligase from Corynebacterium striatum.